Here is a 294-residue protein sequence, read N- to C-terminus: Glyceraldehyde-3-phosphate dehydrogenase (294 aa).

The NAD(+) site is built by Asp19, Lys63, and Thr105. Residues 134 to 136 (SCT) and Thr165 each bind D-glyceraldehyde 3-phosphate. Cys135 serves as the catalytic Nucleophile. The interval 169–188 (KTVDGPSHKDWRGGRGASQN) is disordered. Residues 194–195 (TG) and Arg217 contribute to the D-glyceraldehyde 3-phosphate site.

It belongs to the glyceraldehyde-3-phosphate dehydrogenase family. Homotetramer.

The protein localises to the cytoplasm. The catalysed reaction is D-glyceraldehyde 3-phosphate + phosphate + NAD(+) = (2R)-3-phospho-glyceroyl phosphate + NADH + H(+). The protein operates within carbohydrate degradation; glycolysis; pyruvate from D-glyceraldehyde 3-phosphate: step 1/5. Functionally, catalyzes the oxidative phosphorylation of glyceraldehyde 3-phosphate (G3P) to 1,3-bisphosphoglycerate (BPG) using the cofactor NAD. The first reaction step involves the formation of a hemiacetal intermediate between G3P and a cysteine residue, and this hemiacetal intermediate is then oxidized to a thioester, with concomitant reduction of NAD to NADH. The reduced NADH is then exchanged with the second NAD, and the thioester is attacked by a nucleophilic inorganic phosphate to produce BPG. This chain is Glyceraldehyde-3-phosphate dehydrogenase (gap), found in Serratia marcescens.